Here is a 432-residue protein sequence, read N- to C-terminus: G-protein coupled receptor 22 (432 aa).

Residues 1–45 (MCFSPVLEINMQSESNVTVRDDIDDIDTNMYQPLSYPLSFQVSLT) are Extracellular-facing. Residue Asn-16 is glycosylated (N-linked (GlcNAc...) asparagine). The helical transmembrane segment at 46 to 66 (GFLMLEIVLGLGSNLTVLVLY) threads the bilayer. At 67–85 (CMKSNLINSVSNIITMNLH) the chain is on the cytoplasmic side. A helical membrane pass occupies residues 86-106 (VLDVIICVGCIPLTIVILLLS). The Extracellular portion of the chain corresponds to 107–115 (LESNTALIC). A helical membrane pass occupies residues 116-136 (CFHEACVSFASVSTAINVFAI). At 137 to 156 (TLDRYDISVKPANRILTMGR) the chain is on the cytoplasmic side. The helical transmembrane segment at 157–177 (AVMLMTSIWIFSFFSFLIPFI) threads the bilayer. The Extracellular portion of the chain corresponds to 178-208 (EVNFFSLQSGNTWANKTLLCVSTSEYYTELG). N-linked (GlcNAc...) asparagine glycosylation is present at Asn-192. Residues 209–229 (MYYHLLVQIPIFFFTVIVMLI) form a helical membrane-spanning segment. Residues 230–314 (TYTKILQALN…ERQKRVFKMS (85 aa)) lie on the Cytoplasmic side of the membrane. A helical transmembrane segment spans residues 315 to 335 (LLIISTFLLCWTPISVLNTTI). The Extracellular segment spans residues 336-348 (LCLGPSDLLVKLR). Residues 349 to 369 (LCFLVMAYGTTIFHPLLYAFT) traverse the membrane as a helical segment. The Cytoplasmic portion of the chain corresponds to 370–432 (RQKFQKVLKS…KCLVPQVVTD (63 aa)).

This sequence belongs to the G-protein coupled receptor 1 family. As to expression, abundant levels detected in the brain and heart and no detectable expression in other peripheral tissues.

The protein localises to the cell membrane. Functionally, orphan G-protein coupled receptor. Seems to act through a G(i)/G(o) mediated pathway. May be involved in ciliogenesis. This chain is G-protein coupled receptor 22 (Gpr22), found in Mus musculus (Mouse).